We begin with the raw amino-acid sequence, 500 residues long: Aldehyde dehydrogenase (500 aa).

246 to 251 (GSTLVG) is an NAD(+) binding site. Glu-269 acts as the Proton acceptor in catalysis. Cys-303 functions as the Nucleophile in the catalytic mechanism.

This sequence belongs to the aldehyde dehydrogenase family.

The catalysed reaction is an aldehyde + NAD(+) + H2O = a carboxylate + NADH + 2 H(+). It functions in the pathway alcohol metabolism; ethanol degradation; acetate from ethanol: step 2/2. The chain is Aldehyde dehydrogenase (aldA) from Agaricus bisporus (White button mushroom).